Here is a 561-residue protein sequence, read N- to C-terminus: uncharacterized protein (561 aa).

A compositionally biased stretch (polar residues) spans 1 to 11; that stretch reads MSQVSLPSQLK. 2 disordered regions span residues 1–22 and 522–561; these read MSQV…SRCR and CSLP…IMLP. Residues 541-561 are compositionally biased toward low complexity; it reads QQPQQAQAEQAQQPQQQIMLP.

To Synechocystis PCC 6803 sll0335 and to M.tuberculosis Rv2567.

This is an uncharacterized protein from Mycobacterium leprae (strain TN).